A 66-amino-acid polypeptide reads, in one-letter code: Large ribosomal subunit protein bL35 (66 aa).

Positions 1–23 (MPKMKTHRASAKRFKRTANGGLK) are disordered.

It belongs to the bacterial ribosomal protein bL35 family.

The chain is Large ribosomal subunit protein bL35 from Lactobacillus helveticus (strain DPC 4571).